The sequence spans 1193 residues: Probable DNA-directed RNA polymerase II subunit RPB2 homolog (1193 aa).

D808 contacts Mg(2+). Residues C1137, C1140, C1155, and C1158 each contribute to the Zn(2+) site. A C4-type zinc finger spans residues 1137 to 1158; that stretch reads CVPCKSYFKVVKTQNGFFCSGC.

The protein belongs to the RNA polymerase beta chain family.

It carries out the reaction RNA(n) + a ribonucleoside 5'-triphosphate = RNA(n+1) + diphosphate. In terms of biological role, component of the DNA-dependent RNA polymerase that catalyzes the transcription of DNA into RNA using the four ribonucleoside triphosphates as substrates. Second largest component of RNA polymerase II which synthesizes mRNA precursors and many functional non-coding RNAs. Proposed to contribute to the polymerase catalytic activity and forms the polymerase active center together with the largest subunit. The protein is Probable DNA-directed RNA polymerase II subunit RPB2 homolog of Invertebrate iridescent virus 6 (IIV-6).